The sequence spans 170 residues: RNA pyrophosphohydrolase (170 aa).

Residues 6 to 149 (GFRPNVGIVI…KRDVYRRALK (144 aa)) enclose the Nudix hydrolase domain. The Nudix box signature appears at 38–59 (GGIDDGETPEQAMYRELYEEVG).

It belongs to the Nudix hydrolase family. RppH subfamily. The cofactor is a divalent metal cation.

In terms of biological role, accelerates the degradation of transcripts by removing pyrophosphate from the 5'-end of triphosphorylated RNA, leading to a more labile monophosphorylated state that can stimulate subsequent ribonuclease cleavage. The chain is RNA pyrophosphohydrolase from Aliivibrio fischeri (strain ATCC 700601 / ES114) (Vibrio fischeri).